The primary structure comprises 185 residues: Small ribosomal subunit protein bS16 (185 aa).

A disordered region spans residues 83-185 (QWTHGNNPEK…APASEETTEG (103 aa)). A compositionally biased stretch (basic and acidic residues) spans 89–125 (NPEKAKPGKKAQERDAERTQRDADRVAAEAQAKEDAK). Composition is skewed to low complexity over residues 126 to 146 (AAAAEAAEAAAAAAAEAAAAP) and 159 to 176 (VEAAAEEAPAAEAAAEEA).

This sequence belongs to the bacterial ribosomal protein bS16 family.

The protein is Small ribosomal subunit protein bS16 of Caulobacter sp. (strain K31).